The chain runs to 337 residues: Protein-glutamate methylesterase/protein-glutamine glutaminase of group 3 operon (337 aa).

The Response regulatory domain occupies 2 to 119 (KIAIVNDMPL…GDAREAAAPL (118 aa)). D53 is subject to 4-aspartylphosphate. One can recognise a CheB-type methylesterase domain in the interval 144–337 (PLREASQRRG…AGRLTEFFAK (194 aa)). Residues S160, H187, and D280 contribute to the active site.

It belongs to the CheB family. Phosphorylated by CheA. Phosphorylation of the N-terminal regulatory domain activates the methylesterase activity.

Its subcellular location is the cytoplasm. It carries out the reaction [protein]-L-glutamate 5-O-methyl ester + H2O = L-glutamyl-[protein] + methanol + H(+). The enzyme catalyses L-glutaminyl-[protein] + H2O = L-glutamyl-[protein] + NH4(+). In terms of biological role, involved in chemotaxis. Part of a chemotaxis signal transduction system that modulates chemotaxis in response to various stimuli. Catalyzes the demethylation of specific methylglutamate residues introduced into the chemoreceptors (methyl-accepting chemotaxis proteins or MCP) by CheR. Also mediates the irreversible deamidation of specific glutamine residues to glutamic acid. The protein is Protein-glutamate methylesterase/protein-glutamine glutaminase of group 3 operon of Pseudomonas putida (strain ATCC 47054 / DSM 6125 / CFBP 8728 / NCIMB 11950 / KT2440).